Reading from the N-terminus, the 202-residue chain is Large ribosomal subunit protein bL25 (202 aa).

This sequence belongs to the bacterial ribosomal protein bL25 family. CTC subfamily. As to quaternary structure, part of the 50S ribosomal subunit; part of the 5S rRNA/L5/L18/L25 subcomplex. Contacts the 5S rRNA. Binds to the 5S rRNA independently of L5 and L18.

Its function is as follows. This is one of the proteins that binds to the 5S RNA in the ribosome where it forms part of the central protuberance. This chain is Large ribosomal subunit protein bL25, found in Clostridium perfringens (strain ATCC 13124 / DSM 756 / JCM 1290 / NCIMB 6125 / NCTC 8237 / Type A).